The primary structure comprises 492 residues: Catalase (492 aa).

Residues histidine 65 and asparagine 138 contribute to the active site. Tyrosine 348 provides a ligand contact to heme.

The protein belongs to the catalase family. As to quaternary structure, homotetramer. The cofactor is heme.

It is found in the cytoplasm. Its subcellular location is the cytosol. The protein localises to the peroxisome matrix. The catalysed reaction is 2 H2O2 = O2 + 2 H2O. Functionally, catalyzes the degradation of hydrogen peroxide (H(2)O(2)) generated by peroxisomal oxidases to water and oxygen, thereby protecting cells from the toxic effects of hydrogen peroxide. This is Catalase from Helianthus annuus (Common sunflower).